The following is a 355-amino-acid chain: Glycerol-1-phosphate dehydrogenase [NAD(P)+] (355 aa).

Residues 101-105 (GKSID) and 123-126 (TAAS) each bind NAD(+). Asp128 serves as a coordination point for substrate. Ser132 serves as a coordination point for NAD(+). Asp175 lines the substrate pocket. Asp175 and His255 together coordinate Zn(2+). His259 lines the substrate pocket. Position 271 (His271) interacts with Zn(2+).

It belongs to the glycerol-1-phosphate dehydrogenase family. Homodimer. It depends on Zn(2+) as a cofactor.

It is found in the cytoplasm. The catalysed reaction is sn-glycerol 1-phosphate + NAD(+) = dihydroxyacetone phosphate + NADH + H(+). The enzyme catalyses sn-glycerol 1-phosphate + NADP(+) = dihydroxyacetone phosphate + NADPH + H(+). It functions in the pathway membrane lipid metabolism; glycerophospholipid metabolism. Functionally, catalyzes the NAD(P)H-dependent reduction of dihydroxyacetonephosphate (DHAP or glycerone phosphate) to glycerol 1-phosphate (G1P). The G1P thus generated is used as the glycerophosphate backbone of phospholipids in the cellular membranes of Archaea. The protein is Glycerol-1-phosphate dehydrogenase [NAD(P)+] of Staphylothermus marinus (strain ATCC 43588 / DSM 3639 / JCM 9404 / F1).